The sequence spans 276 residues: Small ribosomal subunit protein uS2 (276 aa).

The tract at residues 254-276 (LAGATAAAPAEGAVATETTPTEG) is disordered. Over residues 255-276 (AGATAAAPAEGAVATETTPTEG) the composition is skewed to low complexity.

This sequence belongs to the universal ribosomal protein uS2 family.

The chain is Small ribosomal subunit protein uS2 from Mycobacterium ulcerans (strain Agy99).